The following is a 210-amino-acid chain: Probable membrane protein Rv1733c (210 aa).

2 consecutive transmembrane segments (helical) span residues A43–A63 and A165–L185.

The protein resides in the cell membrane. This is Probable membrane protein Rv1733c from Mycobacterium tuberculosis (strain ATCC 25618 / H37Rv).